The chain runs to 351 residues: Histidinol-phosphate aminotransferase (351 aa).

Residues 1–26 (MRFRAELEPLSPYNPPRASQEAAAER) are disordered. The residue at position 223 (Lys-223) is an N6-(pyridoxal phosphate)lysine.

Belongs to the class-II pyridoxal-phosphate-dependent aminotransferase family. Histidinol-phosphate aminotransferase subfamily. Homodimer. Pyridoxal 5'-phosphate serves as cofactor.

It carries out the reaction L-histidinol phosphate + 2-oxoglutarate = 3-(imidazol-4-yl)-2-oxopropyl phosphate + L-glutamate. The protein operates within amino-acid biosynthesis; L-histidine biosynthesis; L-histidine from 5-phospho-alpha-D-ribose 1-diphosphate: step 7/9. The sequence is that of Histidinol-phosphate aminotransferase from Rubrobacter xylanophilus (strain DSM 9941 / JCM 11954 / NBRC 16129 / PRD-1).